The sequence spans 409 residues: Multidrug efflux pump Tap (409 aa).

Transmembrane regions (helical) follow at residues 10–30 (LLIL…IVAF), 46–66 (IVAM…GAAV), 80–98 (LLSA…IFGV), 104–123 (AVLA…GMTA), 144–168 (SVYE…IATL), 174–193 (MWVT…VLRL), 218–240 (FVWY…GLYM), 260–282 (LGWV…AVMS), 289–308 (ATML…IAFL), 313–335 (LILV…YNYV), 348–370 (VVGV…AGPL), and 375–397 (GLHA…AVFL).

Belongs to the major facilitator superfamily. Drug:H(+) antiporter-3 (DHA3) (TC 2.A.1.21) family.

The protein resides in the cell inner membrane. Its activity is regulated as follows. Efflux activity is inhibited by carbonyl cyanide m-chlorophenylhydrazone (CCCP) and reserpine, but not by o-vanadate or chlorpromazine (CPZ). Its function is as follows. Efflux pump that contributes to intrinsic antibiotic resistance. The pump uses the electrochemical gradient as a source of energy. Confers low-level resistance to tetracycline and to several aminoglycosides, including streptomycin, gentamicin, 2'-N-ethylnetilmicin and 6'-N-ethylnetilmicin. This is Multidrug efflux pump Tap from Mycolicibacterium fortuitum (Mycobacterium fortuitum).